Reading from the N-terminus, the 367-residue chain is Probable neutral protease 2 homolog MCYG_00239 (367 aa).

A signal peptide spans 1–19; sequence MQVLVALAALSSLAAPVVG. A propeptide spanning residues 20 to 190 is cleaved from the precursor; sequence FSIPRGVPVS…DGPFTRIDKR (171 aa). Disulfide bonds link Cys198–Cys268, Cys275–Cys293, and Cys307–Cys367. His318 is a binding site for Zn(2+). The active site involves Glu319. Zn(2+) is bound by residues His322 and Asp333.

It belongs to the peptidase M35 family. Zn(2+) is required as a cofactor.

It localises to the secreted. The catalysed reaction is Preferential cleavage of bonds with hydrophobic residues in P1'. Also 3-Asn-|-Gln-4 and 8-Gly-|-Ser-9 bonds in insulin B chain.. Its function is as follows. Probable secreted metalloprotease that shows high activities on basic nuclear substrates such as histone and protamine. May be involved in virulence. The protein is Probable neutral protease 2 homolog MCYG_00239 of Arthroderma otae (strain ATCC MYA-4605 / CBS 113480) (Microsporum canis).